A 905-amino-acid chain; its full sequence is DNA gyrase subunit A (905 aa).

The Topo IIA-type catalytic domain occupies 35–524; the sequence is IPDVRDGLKP…GEFDQDIEDL (490 aa). Residue tyrosine 123 is the O-(5'-phospho-DNA)-tyrosine intermediate of the active site. The GyrA-box signature appears at 551-557; the sequence is QKRGGKG. The disordered stretch occupies residues 882 to 905; the sequence is IAESSDDNEEDSEFEEEVAEEGSE. Residues 885-905 show a composition bias toward acidic residues; that stretch reads SSDDNEEDSEFEEEVAEEGSE.

This sequence belongs to the type II topoisomerase GyrA/ParC subunit family. Heterotetramer, composed of two GyrA and two GyrB chains. In the heterotetramer, GyrA contains the active site tyrosine that forms a transient covalent intermediate with DNA, while GyrB binds cofactors and catalyzes ATP hydrolysis.

Its subcellular location is the cytoplasm. It catalyses the reaction ATP-dependent breakage, passage and rejoining of double-stranded DNA.. Functionally, a type II topoisomerase that negatively supercoils closed circular double-stranded (ds) DNA in an ATP-dependent manner to modulate DNA topology and maintain chromosomes in an underwound state. Negative supercoiling favors strand separation, and DNA replication, transcription, recombination and repair, all of which involve strand separation. Also able to catalyze the interconversion of other topological isomers of dsDNA rings, including catenanes and knotted rings. Type II topoisomerases break and join 2 DNA strands simultaneously in an ATP-dependent manner. The polypeptide is DNA gyrase subunit A (Rickettsia bellii (strain RML369-C)).